Consider the following 1501-residue polypeptide: EF-hand calcium-binding domain-containing protein 6 (1501 aa).

Positions 18–47 (RKFTHSRPHSSPCRVYSRNGSPNKFRSSST) are disordered. Residues 35-47 (RNGSPNKFRSSST) are compositionally biased toward polar residues. 7 EF-hand domains span residues 70-105 (DRGD…FLMP), 172-207 (KNIK…FCMK), 297-332 (KSYE…FVYQ), 403-438 (DHSA…MAVK), 439-474 (LSDS…NCRM), 504-539 (RNLQ…FCPF), and 634-669 (QQDP…TGMP). The disordered stretch occupies residues 699-718 (EDPPMRGPETTPPQPPTPSK). 7 consecutive EF-hand domains span residues 741–776 (ESFR…LLLN), 847–882 (NRWS…FDIP), 883–918 (LTPR…NYSP), 964–999 (DRHQ…CGCS), 1069–1104 (SSQL…FCYK), 1176–1211 (SHYH…RVQI), and 1212–1247 (LTDE…ETAA). The Ca(2+) site is built by Asp754, Asp756, Asp758, and Asp765. At Thr884 the chain carries Phosphothreonine. A disordered region spans residues 1246–1307 (AATPMATGDS…TTVIPGTPPL (62 aa)). 2 stretches are compositionally biased toward polar residues: residues 1270-1279 (GTRSALSLPT) and 1286-1301 (SKSQ…TTVI). A Phosphoserine modification is found at Ser1290. Phosphothreonine occurs at positions 1294 and 1304. Positions 1303-1501 (GTPPLQNCDP…YNDFLRAFLQ (199 aa)) are interaction with PARK7. 3 EF-hand domains span residues 1359–1394 (ISKE…LLKA), 1434–1469 (HCWR…YSIN), and 1470–1501 (LSEE…AFLQ). An interaction with AR region spans residues 1407–1501 (NAHKMKEAGA…YNDFLRAFLQ (95 aa)).

In terms of assembly, microtubule inner protein component of sperm flagellar doublet microtubules. Binds PARK7. Part of a ternary complex containing PARK7, EFCAB6/DJBP and AR. Specifically expressed in the testis.

It localises to the nucleus. It is found in the cytoplasm. Its subcellular location is the cytoskeleton. The protein resides in the flagellum axoneme. Its function is as follows. Negatively regulates the androgen receptor by recruiting histone deacetylase complex, and protein DJ-1 antagonizes this inhibition by abrogation of this complex. Microtubule inner protein (MIP) part of the dynein-decorated doublet microtubules (DMTs) in cilia axoneme, which is required for motile cilia beating. The polypeptide is EF-hand calcium-binding domain-containing protein 6 (Homo sapiens (Human)).